Here is a 181-residue protein sequence, read N- to C-terminus: NADH-quinone oxidoreductase subunit B (181 aa).

The [4Fe-4S] cluster site is built by C60, C61, C125, and C155.

It belongs to the complex I 20 kDa subunit family. As to quaternary structure, NDH-1 is composed of 14 different subunits. Subunits NuoB, C, D, E, F, and G constitute the peripheral sector of the complex. [4Fe-4S] cluster is required as a cofactor.

The protein resides in the cell inner membrane. It catalyses the reaction a quinone + NADH + 5 H(+)(in) = a quinol + NAD(+) + 4 H(+)(out). Functionally, NDH-1 shuttles electrons from NADH, via FMN and iron-sulfur (Fe-S) centers, to quinones in the respiratory chain. Couples the redox reaction to proton translocation (for every two electrons transferred, four hydrogen ions are translocated across the cytoplasmic membrane), and thus conserves the redox energy in a proton gradient. This chain is NADH-quinone oxidoreductase subunit B, found in Novosphingobium aromaticivorans (strain ATCC 700278 / DSM 12444 / CCUG 56034 / CIP 105152 / NBRC 16084 / F199).